A 108-amino-acid chain; its full sequence is Nucleoid-associated protein Mmwyl1_2533 (108 aa).

The disordered stretch occupies residues 1–22 (MFKGGMGNMMRQAQQMQENMQK). Over residues 11 to 22 (RQAQQMQENMQK) the composition is skewed to polar residues.

This sequence belongs to the YbaB/EbfC family. Homodimer.

Its subcellular location is the cytoplasm. It is found in the nucleoid. Functionally, binds to DNA and alters its conformation. May be involved in regulation of gene expression, nucleoid organization and DNA protection. This chain is Nucleoid-associated protein Mmwyl1_2533, found in Marinomonas sp. (strain MWYL1).